A 117-amino-acid polypeptide reads, in one-letter code: V-type proton ATPase subunit G (117 aa).

It belongs to the V-ATPase G subunit family. V-ATPase is a heteromultimeric enzyme made up of two complexes: the ATP-hydrolytic V1 complex and the proton translocation V0 complex. The V1 complex consists of three catalytic AB heterodimers that form a heterohexamer, three peripheral stalks each consisting of EG heterodimers, one central rotor including subunits D and F, and the regulatory subunits C and H. The proton translocation complex V0 consists of the proton transport subunit a, a ring of proteolipid subunits c9c'', rotary subunit d, subunits e and f, and the accessory subunits VhaAC45 and ATP6AP2.

Subunit of the V1 complex of vacuolar(H+)-ATPase (V-ATPase), a multisubunit enzyme composed of a peripheral complex (V1) that hydrolyzes ATP and a membrane integral complex (V0) that translocates protons. V-ATPase is responsible for acidifying and maintaining the pH of intracellular compartments and in some cell types, is targeted to the plasma membrane, where it is responsible for acidifying the extracellular environment. In enterocytes, acts as part of a pHCl-2 sensory pathway which mediates Tor-dependent larval growth and metabolism in response to zinc availability. Likely acts in maintaining enterocyte lysosomal acidification which consequently promotes Tor activation at the lysosome membrane. In Drosophila melanogaster (Fruit fly), this protein is V-type proton ATPase subunit G (Vha13).